Here is a 263-residue protein sequence, read N- to C-terminus: Dermonecrotic toxin SpaSicTox-betaIF1 (263 aa).

Residues Glu15 and Asp17 each contribute to the Mg(2+) site. Residue His31 is the Nucleophile of the active site. 2 disulfide bridges follow: Cys35–Cys41 and Cys37–Cys179. Residue Asp75 coordinates Mg(2+).

The protein belongs to the arthropod phospholipase D family. Class II subfamily. The cofactor is Mg(2+). In terms of tissue distribution, expressed by the venom gland.

It localises to the secreted. The catalysed reaction is an N-(acyl)-sphingosylphosphocholine = an N-(acyl)-sphingosyl-1,3-cyclic phosphate + choline. It catalyses the reaction an N-(acyl)-sphingosylphosphoethanolamine = an N-(acyl)-sphingosyl-1,3-cyclic phosphate + ethanolamine. It carries out the reaction a 1-acyl-sn-glycero-3-phosphocholine = a 1-acyl-sn-glycero-2,3-cyclic phosphate + choline. The enzyme catalyses a 1-acyl-sn-glycero-3-phosphoethanolamine = a 1-acyl-sn-glycero-2,3-cyclic phosphate + ethanolamine. In terms of biological role, dermonecrotic toxins cleave the phosphodiester linkage between the phosphate and headgroup of certain phospholipids (sphingolipid and lysolipid substrates), forming an alcohol (often choline) and a cyclic phosphate. This toxin acts on sphingomyelin (SM). It may also act on ceramide phosphoethanolamine (CPE), lysophosphatidylcholine (LPC) and lysophosphatidylethanolamine (LPE), but not on lysophosphatidylserine (LPS), and lysophosphatidylglycerol (LPG). It acts by transphosphatidylation, releasing exclusively cyclic phosphate products as second products. Induces dermonecrosis, hemolysis, increased vascular permeability, edema, inflammatory response, and platelet aggregation. This Sicarius patagonicus (Six-eyed sand spider) protein is Dermonecrotic toxin SpaSicTox-betaIF1.